The sequence spans 142 residues: D-aminoacyl-tRNA deacylase (142 aa).

A Gly-cisPro motif, important for rejection of L-amino acids motif is present at residues 133 to 134 (GP).

It belongs to the DTD family. In terms of assembly, homodimer.

Its subcellular location is the cytoplasm. It carries out the reaction glycyl-tRNA(Ala) + H2O = tRNA(Ala) + glycine + H(+). The enzyme catalyses a D-aminoacyl-tRNA + H2O = a tRNA + a D-alpha-amino acid + H(+). An aminoacyl-tRNA editing enzyme that deacylates mischarged D-aminoacyl-tRNAs. Also deacylates mischarged glycyl-tRNA(Ala), protecting cells against glycine mischarging by AlaRS. Acts via tRNA-based rather than protein-based catalysis; rejects L-amino acids rather than detecting D-amino acids in the active site. By recycling D-aminoacyl-tRNA to D-amino acids and free tRNA molecules, this enzyme counteracts the toxicity associated with the formation of D-aminoacyl-tRNA entities in vivo and helps enforce protein L-homochirality. The chain is D-aminoacyl-tRNA deacylase from Acidothermus cellulolyticus (strain ATCC 43068 / DSM 8971 / 11B).